The sequence spans 759 residues: Catalase-peroxidase (759 aa).

A disordered region spans residues 1-24; the sequence is MTQDKCPFKEQPSQPNFAGGGTSN. A cross-link (tryptophyl-tyrosyl-methioninium (Trp-Tyr) (with M-268)) is located at residues 96–242; the sequence is WHSAGTYRVF…LAAAHMGLIY (147 aa). Catalysis depends on histidine 97, which acts as the Proton acceptor. The segment at residues 242–268 is a cross-link (tryptophyl-tyrosyl-methioninium (Tyr-Met) (with W-96)); the sequence is YVNPEGPDGNPDPIAAAHDIRDTFGRM. Heme b is bound at residue histidine 283.

Belongs to the peroxidase family. Peroxidase/catalase subfamily. Homodimer or homotetramer. Requires heme b as cofactor. In terms of processing, formation of the three residue Trp-Tyr-Met cross-link is important for the catalase, but not the peroxidase activity of the enzyme.

The protein resides in the cytoplasm. The catalysed reaction is H2O2 + AH2 = A + 2 H2O. It carries out the reaction 2 H2O2 = O2 + 2 H2O. Bifunctional enzyme with both catalase and broad-spectrum peroxidase activity. This is Catalase-peroxidase from Neosartorya fischeri (strain ATCC 1020 / DSM 3700 / CBS 544.65 / FGSC A1164 / JCM 1740 / NRRL 181 / WB 181) (Aspergillus fischerianus).